The sequence spans 296 residues: Ribosomal RNA small subunit methyltransferase A (296 aa).

The S-adenosyl-L-methionine site is built by asparagine 30, leucine 32, glycine 57, glutamate 78, aspartate 103, and asparagine 128.

It belongs to the class I-like SAM-binding methyltransferase superfamily. rRNA adenine N(6)-methyltransferase family. RsmA subfamily.

It localises to the cytoplasm. It catalyses the reaction adenosine(1518)/adenosine(1519) in 16S rRNA + 4 S-adenosyl-L-methionine = N(6)-dimethyladenosine(1518)/N(6)-dimethyladenosine(1519) in 16S rRNA + 4 S-adenosyl-L-homocysteine + 4 H(+). Its function is as follows. Specifically dimethylates two adjacent adenosines (A1518 and A1519) in the loop of a conserved hairpin near the 3'-end of 16S rRNA in the 30S particle. May play a critical role in biogenesis of 30S subunits. The chain is Ribosomal RNA small subunit methyltransferase A from Staphylococcus haemolyticus (strain JCSC1435).